A 216-amino-acid chain; its full sequence is Probable nicotinate-nucleotide adenylyltransferase (216 aa).

The protein belongs to the NadD family.

The catalysed reaction is nicotinate beta-D-ribonucleotide + ATP + H(+) = deamido-NAD(+) + diphosphate. Its pathway is cofactor biosynthesis; NAD(+) biosynthesis; deamido-NAD(+) from nicotinate D-ribonucleotide: step 1/1. Its function is as follows. Catalyzes the reversible adenylation of nicotinate mononucleotide (NaMN) to nicotinic acid adenine dinucleotide (NaAD). This chain is Probable nicotinate-nucleotide adenylyltransferase, found in Geobacter metallireducens (strain ATCC 53774 / DSM 7210 / GS-15).